A 1027-amino-acid chain; its full sequence is Sodium/potassium-transporting ATPase subunit alpha-1 (1027 aa).

Positions 1–5 are excised as a propeptide; sequence MGVGD. Residues 1 to 10 show a composition bias toward basic and acidic residues; the sequence is MGVGDGRDQY. Residues 1–39 form a disordered region; sequence MGVGDGRDQYELAAMSEQSGKKKSKNKKEKKEKDMDELK. Residues 6-90 are Cytoplasmic-facing; that stretch reads GRDQYELAAM…NALTPPPTTP (85 aa). Ser-16 carries the phosphoserine; by PKC modification. The span at 29–39 shows a compositional bias: basic and acidic residues; it reads EKKEKDMDELK. An interaction with phosphoinositide-3 kinase region spans residues 85–87; it reads PPP. A helical transmembrane segment spans residues 91–111; that stretch reads EWVKFCKQMFGGFSMLLWTGA. The Extracellular segment spans residues 112–134; it reads VLCFLAYGILAAMEDEPANDNLY. Residues 135 to 155 traverse the membrane as a helical segment; the sequence is LGVVLSAVVIITGCFSYYQDA. At 156–291 the chain is on the cytoplasmic side; the sequence is KSSKIMDSFK…VGRTPISIEI (136 aa). Residues 217–238 are disordered; sequence DNSSLTGESEPQTRSPDFSNDN. Residues 292 to 311 traverse the membrane as a helical segment; the sequence is EHFIHIITGVAVFLGVSFLL. At 312–323 the chain is on the extracellular side; it reads LSLVLGYSWLEA. A helical transmembrane segment spans residues 324–341; sequence VIFLIGIIVANVPEGLLA. Residues 342 to 776 lie on the Cytoplasmic side of the membrane; sequence TVTVCLTLTA…EEGRLIFDNL (435 aa). The active-site 4-aspartylphosphate intermediate is Asp-379. Lys-490 lines the ATP pocket. Mg(2+) is bound by residues Asp-721 and Asp-725. Residues 777-796 traverse the membrane as a helical segment; that stretch reads KKSIAYTLTSNIPEITPFLF. Over 797 to 806 the chain is Extracellular; that stretch reads FIIANIPLPL. The chain crosses the membrane as a helical span at residues 807–827; sequence GTVTILCIDLGTDMLPAISLA. Residues 828–847 are Cytoplasmic-facing; it reads YEAAESDIMKRQPRNPKTDK. A helical transmembrane segment spans residues 848 to 870; that stretch reads LVNERLISIAYGQIGMIQALAGF. At 871-922 the chain is on the extracellular side; sequence FTYFVILAENGFLPPRLLGIRMNWDDKYINDLEDSYGQQWTYEQRKIVEFTC. A helical membrane pass occupies residues 923 to 942; it reads HTAFFTSIVIVQWADLIICK. Residues 943 to 955 lie on the Cytoplasmic side of the membrane; sequence TRRNSVFQQGMKN. Residue Ser-947 is modified to Phosphoserine; by PKA. The helical transmembrane segment at 956–974 threads the bilayer; sequence KILIFGLFEETALAAFLSY. Residues 975 to 989 are Extracellular-facing; it reads CPGMDVALRMYPLKP. Residues 990–1010 traverse the membrane as a helical segment; the sequence is NWWFCAFPYSLLIFIYDEIRK. Residues 1011–1027 lie on the Cytoplasmic side of the membrane; sequence LILRRNPGGWMERETYY.

This sequence belongs to the cation transport ATPase (P-type) (TC 3.A.3) family. Type IIC subfamily. As to quaternary structure, the sodium/potassium-transporting ATPase is composed of a catalytic alpha subunit, an auxiliary non-catalytic beta subunit and an additional regulatory subunit.

It is found in the cell membrane. It localises to the sarcolemma. It carries out the reaction K(+)(out) + Na(+)(in) + ATP + H2O = K(+)(in) + Na(+)(out) + ADP + phosphate + H(+). This is the catalytic component of the active enzyme, which catalyzes the hydrolysis of ATP coupled with the exchange of sodium and potassium ions across the plasma membrane. This action creates the electrochemical gradient of sodium and potassium ions, providing the energy for active transport of various nutrients. In Catostomus commersonii (White sucker), this protein is Sodium/potassium-transporting ATPase subunit alpha-1 (atp1a1).